Here is a 185-residue protein sequence, read N- to C-terminus: Elongation factor P (185 aa).

The protein belongs to the elongation factor P family.

It localises to the cytoplasm. The protein operates within protein biosynthesis; polypeptide chain elongation. Its function is as follows. Involved in peptide bond synthesis. Stimulates efficient translation and peptide-bond synthesis on native or reconstituted 70S ribosomes in vitro. Probably functions indirectly by altering the affinity of the ribosome for aminoacyl-tRNA, thus increasing their reactivity as acceptors for peptidyl transferase. The sequence is that of Elongation factor P from Lactococcus lactis subsp. cremoris (strain MG1363).